Consider the following 342-residue polypeptide: Dihydroorotate dehydrogenase (quinone) (342 aa).

FMN-binding positions include 65–69 and Thr-89; that span reads AGLDK. Lys-69 is a binding site for substrate. Substrate is bound at residue 114 to 118; the sequence is NRMGF. Asn-142 and Asn-175 together coordinate FMN. Asn-175 contributes to the substrate binding site. The active-site Nucleophile is Ser-178. Asn-180 serves as a coordination point for substrate. Residues Lys-220 and Thr-248 each contribute to the FMN site. 249–250 lines the substrate pocket; sequence NT. Residues Gly-271, Gly-300, and 321–322 each bind FMN; that span reads YT.

The protein belongs to the dihydroorotate dehydrogenase family. Type 2 subfamily. As to quaternary structure, monomer. It depends on FMN as a cofactor.

It is found in the cell membrane. It catalyses the reaction (S)-dihydroorotate + a quinone = orotate + a quinol. The protein operates within pyrimidine metabolism; UMP biosynthesis via de novo pathway; orotate from (S)-dihydroorotate (quinone route): step 1/1. Its function is as follows. Catalyzes the conversion of dihydroorotate to orotate with quinone as electron acceptor. The chain is Dihydroorotate dehydrogenase (quinone) from Burkholderia pseudomallei (strain 668).